Consider the following 152-residue polypeptide: Putative polyketide cyclase (152 aa).

This sequence to polyketide cyclases.

It participates in antibiotic biosynthesis; curamycin biosynthesis. This Streptomyces cyaneus (Streptomyces curacoi) protein is Putative polyketide cyclase (curF).